We begin with the raw amino-acid sequence, 317 residues long: tRNA dimethylallyltransferase (317 aa).

Residue 14 to 21 (GPTASGKT) participates in ATP binding. 16–21 (TASGKT) lines the substrate pocket. Interaction with substrate tRNA regions lie at residues 39–42 (DSAL), 163–167 (QRIQR), and 248–253 (RCVGYR).

Belongs to the IPP transferase family. Monomer. It depends on Mg(2+) as a cofactor.

It carries out the reaction adenosine(37) in tRNA + dimethylallyl diphosphate = N(6)-dimethylallyladenosine(37) in tRNA + diphosphate. Catalyzes the transfer of a dimethylallyl group onto the adenine at position 37 in tRNAs that read codons beginning with uridine, leading to the formation of N6-(dimethylallyl)adenosine (i(6)A). The polypeptide is tRNA dimethylallyltransferase (Paraburkholderia phymatum (strain DSM 17167 / CIP 108236 / LMG 21445 / STM815) (Burkholderia phymatum)).